A 644-amino-acid chain; its full sequence is Chaperone protein DnaK (644 aa).

Thr199 bears the Phosphothreonine; by autocatalysis mark. Basic and acidic residues predominate over residues Ala550–Arg584. Disordered stretches follow at residues Ala550–Ser586 and Tyr599–Lys644. Residues Ser600–Gly623 are compositionally biased toward low complexity.

This sequence belongs to the heat shock protein 70 family.

Its function is as follows. Acts as a chaperone. This Leptospira biflexa serovar Patoc (strain Patoc 1 / Ames) protein is Chaperone protein DnaK.